The following is a 467-amino-acid chain: tRNA-2-methylthio-N(6)-dimethylallyladenosine synthase (467 aa).

Residues Met-1–Ala-20 are disordered. The MTTase N-terminal domain maps to Arg-23 to Gly-143. The [4Fe-4S] cluster site is built by Cys-32, Cys-68, Cys-106, Cys-184, Cys-188, and Cys-191. The Radical SAM core domain maps to Arg-170–Ala-402. The 63-residue stretch at Asp-405–Ala-467 folds into the TRAM domain.

It belongs to the methylthiotransferase family. MiaB subfamily. Monomer. [4Fe-4S] cluster serves as cofactor.

The protein resides in the cytoplasm. The enzyme catalyses N(6)-dimethylallyladenosine(37) in tRNA + (sulfur carrier)-SH + AH2 + 2 S-adenosyl-L-methionine = 2-methylsulfanyl-N(6)-dimethylallyladenosine(37) in tRNA + (sulfur carrier)-H + 5'-deoxyadenosine + L-methionine + A + S-adenosyl-L-homocysteine + 2 H(+). Catalyzes the methylthiolation of N6-(dimethylallyl)adenosine (i(6)A), leading to the formation of 2-methylthio-N6-(dimethylallyl)adenosine (ms(2)i(6)A) at position 37 in tRNAs that read codons beginning with uridine. This Brucella abortus (strain S19) protein is tRNA-2-methylthio-N(6)-dimethylallyladenosine synthase.